Reading from the N-terminus, the 246-residue chain is Ly6/PLAUR domain-containing protein 4 (246 aa).

The signal sequence occupies residues 1 to 26 (MGPQHLSPMQLLCLLGAISSLPWAEA). N-linked (GlcNAc...) asparagine glycosylation occurs at asparagine 117. A UPAR/Ly6 domain is found at 142-223 (CPTCVGEHSK…INIVEKALFT (82 aa)). Alanine 225 is lipidated: GPI-anchor amidated alanine. Positions 226 to 246 (GTPCRSPSWGILLGLLFAFKG) are cleaved as a propeptide — removed in mature form.

It is found in the cell membrane. In Bos taurus (Bovine), this protein is Ly6/PLAUR domain-containing protein 4 (LYPD4).